Consider the following 648-residue polypeptide: Macrolide export ATP-binding/permease protein MacB (648 aa).

Residues 5-243 (LELKDIRRSY…AGGTEPVVNT (239 aa)) form the ABC transporter domain. 41 to 48 (GASGSGKS) provides a ligand contact to ATP. 4 helical membrane-spanning segments follow: residues 273 to 293 (LLTMLGIIIGIASVVSIVVVG), 523 to 543 (LFLTLVAVISLVVGGIGVMNI), 576 to 596 (AVLVCLVGGALGITLSLLIAF), and 600 to 620 (LFLPGWEIGFSPLALLLAFLC).

This sequence belongs to the ABC transporter superfamily. Macrolide exporter (TC 3.A.1.122) family. As to quaternary structure, homodimer. Part of the tripartite efflux system MacAB-TolC, which is composed of an inner membrane transporter, MacB, a periplasmic membrane fusion protein, MacA, and an outer membrane component, TolC. The complex forms a large protein conduit and can translocate molecules across both the inner and outer membranes. Interacts with MacA.

It is found in the cell inner membrane. Part of the tripartite efflux system MacAB-TolC. MacB is a non-canonical ABC transporter that contains transmembrane domains (TMD), which form a pore in the inner membrane, and an ATP-binding domain (NBD), which is responsible for energy generation. Confers resistance against macrolides. In Shigella boydii serotype 4 (strain Sb227), this protein is Macrolide export ATP-binding/permease protein MacB.